The primary structure comprises 176 residues: ATP-dependent protease subunit HslV (176 aa).

Thr2 is an active-site residue. Positions 157, 160, and 163 each coordinate Na(+).

Belongs to the peptidase T1B family. HslV subfamily. In terms of assembly, a double ring-shaped homohexamer of HslV is capped on each side by a ring-shaped HslU homohexamer. The assembly of the HslU/HslV complex is dependent on binding of ATP.

The protein localises to the cytoplasm. It carries out the reaction ATP-dependent cleavage of peptide bonds with broad specificity.. Its activity is regulated as follows. Allosterically activated by HslU binding. Protease subunit of a proteasome-like degradation complex believed to be a general protein degrading machinery. This is ATP-dependent protease subunit HslV from Escherichia coli O45:K1 (strain S88 / ExPEC).